We begin with the raw amino-acid sequence, 674 residues long: DNA ligase (674 aa).

NAD(+)-binding positions include 34–38 (DADFD), 82–83 (SL), and Glu-107. Lys-109 serves as the catalytic N6-AMP-lysine intermediate. 4 residues coordinate NAD(+): Arg-130, Glu-170, Lys-286, and Lys-310. The Zn(2+) site is built by Cys-404, Cys-407, Cys-423, and Cys-429. The region spanning 593–674 (KPAQTLEGIT…FTRLLETGEA (82 aa)) is the BRCT domain.

The protein belongs to the NAD-dependent DNA ligase family. LigA subfamily. It depends on Mg(2+) as a cofactor. Mn(2+) is required as a cofactor.

The enzyme catalyses NAD(+) + (deoxyribonucleotide)n-3'-hydroxyl + 5'-phospho-(deoxyribonucleotide)m = (deoxyribonucleotide)n+m + AMP + beta-nicotinamide D-nucleotide.. Its function is as follows. DNA ligase that catalyzes the formation of phosphodiester linkages between 5'-phosphoryl and 3'-hydroxyl groups in double-stranded DNA using NAD as a coenzyme and as the energy source for the reaction. It is essential for DNA replication and repair of damaged DNA. This is DNA ligase from Corynebacterium aurimucosum (strain ATCC 700975 / DSM 44827 / CIP 107346 / CN-1) (Corynebacterium nigricans).